The primary structure comprises 401 residues: MITGAWRCGRKLDAELEICRVTEPIDKPCAESEKVQRWRMSLASLLFFTALLSDHLWLCAGGKLRSRDRTHRRTWNNASHDAQTGLRDEDCGVLLSNLTENGPDCVEADARRRAPLESACSTLYRQKSGSVSSSYSVTVPTVSPHAFLEYFRNFSLSFCDALTIADLLESMTSPDGLNCSLTHIIRDLFSGGPEDGDACSACVHAYTRLDQHAQEKYEEFDALTRKYMADDYSVRAQTHLCQVVYKAWLCAEYFPVPQRQCVRWLPCRHYCGEVTATCPFILPDNDRLLYAGSPSFLCAGFQEEYLSSQGPDCCDVRWSGCDSAVGAACALTHLPGSFSFHRRLSSGAMSCTNRLHGSKLKLCVLVLFLLHTFISITTLQHCSTGSLEAIVPLEEVPMREE.

The chain crosses the membrane as a helical span at residues 42–62 (LASLLFFTALLSDHLWLCAGG). 4 N-linked (GlcNAc...) asparagine glycosylation sites follow: asparagine 77, asparagine 97, asparagine 153, and asparagine 178. The chain crosses the membrane as a helical span at residues 362–382 (LCVLVLFLLHTFISITTLQHC).

It belongs to the NALF family.

Its subcellular location is the membrane. Functionally, probable component of the NALCN channel complex, a channel that regulates the resting membrane potential and controls neuronal excitability. The sequence is that of NALCN channel auxiliary factor 2 (nalf2) from Danio rerio (Zebrafish).